Reading from the N-terminus, the 69-residue chain is MKKKIHPDYFKINVTCSCGNNINIFSTLSKNINVDVCSKCHPFYTGQQRTSDTGGRIEKFHKRFNISSH.

4 residues coordinate Zn(2+): C16, C18, C37, and C40.

Belongs to the bacterial ribosomal protein bL31 family. Type A subfamily. Part of the 50S ribosomal subunit. The cofactor is Zn(2+).

Binds the 23S rRNA. In Buchnera aphidicola subsp. Baizongia pistaciae (strain Bp), this protein is Large ribosomal subunit protein bL31.